We begin with the raw amino-acid sequence, 640 residues long: Antigenic protein NP1 (640 aa).

The 288-residue stretch at 1-288 (VQVSIGKCNH…SYVNIAHAFG (288 aa)) folds into the Peptidase M60 domain. Positions 463–615 (LDPHQVEYEV…TDQSSVNVSK (153 aa)) constitute a PA14 domain.

This chain is Antigenic protein NP1, found in Entamoeba histolytica.